Here is a 475-residue protein sequence, read N- to C-terminus: Ribulose bisphosphate carboxylase large chain (475 aa).

The propeptide occupies 1-2; sequence MS. Proline 3 carries the post-translational modification N-acetylproline. Position 14 is an N6,N6,N6-trimethyllysine (lysine 14). The substrate site is built by asparagine 123 and threonine 173. Residue lysine 175 is the Proton acceptor of the active site. Lysine 177 is a substrate binding site. Mg(2+) is bound by residues lysine 201, aspartate 203, and glutamate 204. Residue lysine 201 is modified to N6-carboxylysine. Catalysis depends on histidine 294, which acts as the Proton acceptor. The substrate site is built by arginine 295, histidine 327, and serine 379.

The protein belongs to the RuBisCO large chain family. Type I subfamily. In terms of assembly, heterohexadecamer of 8 large chains and 8 small chains; disulfide-linked. The disulfide link is formed within the large subunit homodimers. Mg(2+) is required as a cofactor. In terms of processing, the disulfide bond which can form in the large chain dimeric partners within the hexadecamer appears to be associated with oxidative stress and protein turnover.

Its subcellular location is the plastid. It is found in the chloroplast. The catalysed reaction is 2 (2R)-3-phosphoglycerate + 2 H(+) = D-ribulose 1,5-bisphosphate + CO2 + H2O. It catalyses the reaction D-ribulose 1,5-bisphosphate + O2 = 2-phosphoglycolate + (2R)-3-phosphoglycerate + 2 H(+). In terms of biological role, ruBisCO catalyzes two reactions: the carboxylation of D-ribulose 1,5-bisphosphate, the primary event in carbon dioxide fixation, as well as the oxidative fragmentation of the pentose substrate in the photorespiration process. Both reactions occur simultaneously and in competition at the same active site. This is Ribulose bisphosphate carboxylase large chain from Alnus incana (White alder).